The sequence spans 239 residues: MILYPAIDLKDGQCVRLLRGEMEAATVFGDDPAAQAAAFEAAGCEWVHLVDLNGAFAGRPVNAAAVEAILARIAVPAQLGGGIRDMATIALWLEKGLARVILGTVAVENPGLVREAARAFPGRVAVGIDARKGRVATKGWATETDVMATDLARSFEDAGVAAIIYTDIDRDGAMAGPNIEATDALARAVSIPVIASGGVSSLADLLALRDTGSIAGAISGRALYDGALDLTQALQALRT.

D8 acts as the Proton acceptor in catalysis. The active-site Proton donor is the D129.

It belongs to the HisA/HisF family.

It is found in the cytoplasm. The catalysed reaction is 1-(5-phospho-beta-D-ribosyl)-5-[(5-phospho-beta-D-ribosylamino)methylideneamino]imidazole-4-carboxamide = 5-[(5-phospho-1-deoxy-D-ribulos-1-ylimino)methylamino]-1-(5-phospho-beta-D-ribosyl)imidazole-4-carboxamide. Its pathway is amino-acid biosynthesis; L-histidine biosynthesis; L-histidine from 5-phospho-alpha-D-ribose 1-diphosphate: step 4/9. This Cereibacter sphaeroides (strain ATCC 17029 / ATH 2.4.9) (Rhodobacter sphaeroides) protein is 1-(5-phosphoribosyl)-5-[(5-phosphoribosylamino)methylideneamino] imidazole-4-carboxamide isomerase.